The sequence spans 1003 residues: Glycine--tRNA ligase (1003 aa).

Residues 1-310 (MSSQPLTLQA…VTPKKIPTIC (310 aa)) form a glycine--tRNA ligase alpha subunit region. The interval 311–1003 (QPEDFLLEIG…CFGFYAWDVL (693 aa)) is glycine--tRNA ligase beta subunit.

The protein belongs to the class-II aminoacyl-tRNA synthetase family.

The protein resides in the cytoplasm. It carries out the reaction tRNA(Gly) + glycine + ATP = glycyl-tRNA(Gly) + AMP + diphosphate. The polypeptide is Glycine--tRNA ligase (glyQS) (Chlamydia trachomatis serovar L2 (strain ATCC VR-902B / DSM 19102 / 434/Bu)).